Reading from the N-terminus, the 179-residue chain is Inosine/xanthosine triphosphatase (179 aa).

E71 lines the Mg(2+) pocket. 71-72 (EA) serves as a coordination point for substrate.

The protein belongs to the YjjX NTPase family. As to quaternary structure, homodimer. The cofactor is Mg(2+). Requires Mn(2+) as cofactor.

It carries out the reaction XTP + H2O = XDP + phosphate + H(+). It catalyses the reaction ITP + H2O = IDP + phosphate + H(+). In terms of biological role, phosphatase that hydrolyzes non-canonical purine nucleotides such as XTP and ITP to their respective diphosphate derivatives. Probably excludes non-canonical purines from DNA/RNA precursor pool, thus preventing their incorporation into DNA/RNA and avoiding chromosomal lesions. The sequence is that of Inosine/xanthosine triphosphatase from Shewanella oneidensis (strain ATCC 700550 / JCM 31522 / CIP 106686 / LMG 19005 / NCIMB 14063 / MR-1).